The sequence spans 46 residues: Cystatin WCPI-3 (46 aa).

A Secondary area of contact motif is present at residues Val35 to Gly38.

It belongs to the cystatin family. Phytocystatin subfamily.

Functionally, inhibitor of papain. In Wisteria floribunda (Japanese wisteria), this protein is Cystatin WCPI-3.